A 189-amino-acid polypeptide reads, in one-letter code: Interferon alpha-16 (189 aa).

The N-terminal stretch at 1–23 (MALSFSLLMAVLVLSYKSICSLG) is a signal peptide. 2 disulfide bridges follow: Cys24/Cys122 and Cys52/Cys162.

It belongs to the alpha/beta interferon family.

The protein resides in the secreted. In terms of biological role, produced by macrophages, IFN-alpha have antiviral activities. Interferon stimulates the production of two enzymes: a protein kinase and an oligoadenylate synthetase. This Homo sapiens (Human) protein is Interferon alpha-16 (IFNA16).